Here is a 312-residue protein sequence, read N- to C-terminus: Porphobilinogen deaminase (312 aa).

C243 bears the S-(dipyrrolylmethanemethyl)cysteine mark.

Belongs to the HMBS family. As to quaternary structure, monomer. Dipyrromethane is required as a cofactor.

It carries out the reaction 4 porphobilinogen + H2O = hydroxymethylbilane + 4 NH4(+). The protein operates within porphyrin-containing compound metabolism; protoporphyrin-IX biosynthesis; coproporphyrinogen-III from 5-aminolevulinate: step 2/4. Its function is as follows. Tetrapolymerization of the monopyrrole PBG into the hydroxymethylbilane pre-uroporphyrinogen in several discrete steps. The protein is Porphobilinogen deaminase of Vibrio vulnificus (strain CMCP6).